The following is a 401-amino-acid chain: Nicotinate phosphoribosyltransferase (401 aa).

Phosphohistidine; by autocatalysis is present on histidine 224.

It belongs to the NAPRTase family. Transiently phosphorylated on a His residue during the reaction cycle. Phosphorylation strongly increases the affinity for substrates and increases the rate of nicotinate D-ribonucleotide production. Dephosphorylation regenerates the low-affinity form of the enzyme, leading to product release.

It carries out the reaction nicotinate + 5-phospho-alpha-D-ribose 1-diphosphate + ATP + H2O = nicotinate beta-D-ribonucleotide + ADP + phosphate + diphosphate. Its pathway is cofactor biosynthesis; NAD(+) biosynthesis; nicotinate D-ribonucleotide from nicotinate: step 1/1. Catalyzes the synthesis of beta-nicotinate D-ribonucleotide from nicotinate and 5-phospho-D-ribose 1-phosphate at the expense of ATP. The protein is Nicotinate phosphoribosyltransferase of Pseudomonas putida (strain ATCC 47054 / DSM 6125 / CFBP 8728 / NCIMB 11950 / KT2440).